A 225-amino-acid chain; its full sequence is Uracil-DNA glycosylase (225 aa).

The Proton acceptor role is filled by D65.

It belongs to the uracil-DNA glycosylase (UDG) superfamily. UNG family.

Its subcellular location is the cytoplasm. It catalyses the reaction Hydrolyzes single-stranded DNA or mismatched double-stranded DNA and polynucleotides, releasing free uracil.. In terms of biological role, excises uracil residues from the DNA which can arise as a result of misincorporation of dUMP residues by DNA polymerase or due to deamination of cytosine. This chain is Uracil-DNA glycosylase, found in Bacillus cytotoxicus (strain DSM 22905 / CIP 110041 / 391-98 / NVH 391-98).